Here is a 154-residue protein sequence, read N- to C-terminus: MSLGGGGQQQLQQLSQEIQAIEEEVEELEADVASLRQEQTEIEEAKEALDVLETGATVQVPLGGDAYVRAEVKDMDEVVVSLGGGYAAEQDSDAAASVLDEKKATIDGRIDDVQAEIADLSEEAEQLEQQAQQAQQQMMQQQMQAQQQPQDGEQ.

The interval 123-154 (EAEQLEQQAQQAQQQMMQQQMQAQQQPQDGEQ) is disordered. Residues 127–154 (LEQQAQQAQQQMMQQQMQAQQQPQDGEQ) are compositionally biased toward low complexity.

Belongs to the prefoldin alpha subunit family. In terms of assembly, heterohexamer of two alpha and four beta subunits.

The protein resides in the cytoplasm. Its function is as follows. Molecular chaperone capable of stabilizing a range of proteins. Seems to fulfill an ATP-independent, HSP70-like function in archaeal de novo protein folding. The sequence is that of Prefoldin subunit alpha from Halobacterium salinarum (strain ATCC 29341 / DSM 671 / R1).